The primary structure comprises 359 residues: Peptide chain release factor 1 (359 aa).

Glutamine 236 carries the N5-methylglutamine modification.

The protein belongs to the prokaryotic/mitochondrial release factor family. In terms of processing, methylated by PrmC. Methylation increases the termination efficiency of RF1.

The protein localises to the cytoplasm. Its function is as follows. Peptide chain release factor 1 directs the termination of translation in response to the peptide chain termination codons UAG and UAA. This Streptococcus thermophilus (strain ATCC BAA-250 / LMG 18311) protein is Peptide chain release factor 1.